Reading from the N-terminus, the 229-residue chain is MKLVLIRHGQSEWNKLNLFTGWHDVDLSQEGVVEAMTAGKRIKEAGLEFDVAFTSVLTRAIKTLNYVLEESDQMWVPVHKSWRLNERHYGALQGLNKQETAEKYGADQVQKWRRSYDTLPPLLEENDERQAKNDRRYQLLDTHAIPSGENLKVTLERVIPYWMDTIAPEIKEGRRVVIAAHGNSLRALVKFLEGISDDEIMDLEIPTGVPLVYELNDDLKPVNKYYLDK.

Substrate is bound by residues 7–14 (RHGQSEWN), 20–21 (TG), arginine 59, 86–89 (ERHY), lysine 97, 113–114 (RR), and 182–183 (GN). The active-site Tele-phosphohistidine intermediate is histidine 8. Catalysis depends on glutamate 86, which acts as the Proton donor/acceptor.

It belongs to the phosphoglycerate mutase family. BPG-dependent PGAM subfamily.

It catalyses the reaction (2R)-2-phosphoglycerate = (2R)-3-phosphoglycerate. The protein operates within carbohydrate degradation; glycolysis; pyruvate from D-glyceraldehyde 3-phosphate: step 3/5. Functionally, catalyzes the interconversion of 2-phosphoglycerate and 3-phosphoglycerate. This chain is 2,3-bisphosphoglycerate-dependent phosphoglycerate mutase, found in Listeria monocytogenes serotype 4a (strain HCC23).